A 169-amino-acid polypeptide reads, in one-letter code: Peptide methionine sulfoxide reductase MsrA (169 aa).

Cys-10 is a catalytic residue.

It belongs to the MsrA Met sulfoxide reductase family.

It catalyses the reaction L-methionyl-[protein] + [thioredoxin]-disulfide + H2O = L-methionyl-(S)-S-oxide-[protein] + [thioredoxin]-dithiol. The enzyme catalyses [thioredoxin]-disulfide + L-methionine + H2O = L-methionine (S)-S-oxide + [thioredoxin]-dithiol. In terms of biological role, has an important function as a repair enzyme for proteins that have been inactivated by oxidation. Catalyzes the reversible oxidation-reduction of methionine sulfoxide in proteins to methionine. The sequence is that of Peptide methionine sulfoxide reductase MsrA from Streptococcus pyogenes serotype M1.